A 293-amino-acid chain; its full sequence is Sphingolipid C4-hydroxylase sur2 (293 aa).

Helical transmembrane passes span 18–38, 68–88, and 127–147; these read LVSPVIIYWVASAFFGFLHYI, AVLFQQLCEVVVGIALAMFEG, and FIVPAFQYFFAFFIIDSWQYF. One can recognise a Fatty acid hydroxylase domain in the interval 136 to 270; it reads FAFFIIDSWQ…FTFWDHVLGT (135 aa).

The protein belongs to the sterol desaturase family.

The protein resides in the endoplasmic reticulum membrane. Its pathway is membrane lipid metabolism; sphingolipid biosynthesis. Its function is as follows. Required for hydroxylation of C-4 in the sphingoid moiety of ceramide. Involved in the response to syringomycin. The chain is Sphingolipid C4-hydroxylase sur2 (sur2) from Schizosaccharomyces pombe (strain 972 / ATCC 24843) (Fission yeast).